The sequence spans 194 residues: Imidazoleglycerol-phosphate dehydratase (194 aa).

It belongs to the imidazoleglycerol-phosphate dehydratase family.

Its subcellular location is the cytoplasm. The enzyme catalyses D-erythro-1-(imidazol-4-yl)glycerol 3-phosphate = 3-(imidazol-4-yl)-2-oxopropyl phosphate + H2O. It functions in the pathway amino-acid biosynthesis; L-histidine biosynthesis; L-histidine from 5-phospho-alpha-D-ribose 1-diphosphate: step 6/9. The polypeptide is Imidazoleglycerol-phosphate dehydratase (Thermoanaerobacter pseudethanolicus (strain ATCC 33223 / 39E) (Clostridium thermohydrosulfuricum)).